The primary structure comprises 151 residues: 6,7-dimethyl-8-ribityllumazine synthase (151 aa).

Residues phenylalanine 15, 47–49 (TFE), and 71–73 (AVI) each bind 5-amino-6-(D-ribitylamino)uracil. 76 to 77 (ET) serves as a coordination point for (2S)-2-hydroxy-3-oxobutyl phosphate. Histidine 79 (proton donor) is an active-site residue. Leucine 104 lines the 5-amino-6-(D-ribitylamino)uracil pocket. Arginine 119 is a binding site for (2S)-2-hydroxy-3-oxobutyl phosphate.

The protein belongs to the DMRL synthase family.

It carries out the reaction (2S)-2-hydroxy-3-oxobutyl phosphate + 5-amino-6-(D-ribitylamino)uracil = 6,7-dimethyl-8-(1-D-ribityl)lumazine + phosphate + 2 H2O + H(+). It participates in cofactor biosynthesis; riboflavin biosynthesis; riboflavin from 2-hydroxy-3-oxobutyl phosphate and 5-amino-6-(D-ribitylamino)uracil: step 1/2. Catalyzes the formation of 6,7-dimethyl-8-ribityllumazine by condensation of 5-amino-6-(D-ribitylamino)uracil with 3,4-dihydroxy-2-butanone 4-phosphate. This is the penultimate step in the biosynthesis of riboflavin. The polypeptide is 6,7-dimethyl-8-ribityllumazine synthase (Metallosphaera sedula (strain ATCC 51363 / DSM 5348 / JCM 9185 / NBRC 15509 / TH2)).